The sequence spans 669 residues: GTP-binding protein 1 (669 aa).

Residues 1-32 (MAAERSRSPMESPVPASMFAPEPSSPGAARAA) form a disordered region. Residues serine 6, serine 8, serine 12, serine 24, serine 25, serine 44, serine 47, and serine 69 each carry the phosphoserine modification. The tr-type G domain occupies 158–389 (FLEVRVAVVG…LNLLSPRTSY (232 aa)). The interval 167 to 174 (GNVDAGKS) is G1. 167-174 (GNVDAGKS) serves as a coordination point for GTP. Positions 206-210 (GRTSS) are G2. A G3 region spans residues 252–255 (DLAG). GTP contacts are provided by residues 252 to 256 (DLAGH) and 308 to 311 (TKID). Residues 308–311 (TKID) form a G4 region. A G5 region spans residues 366-368 (SNV). A compositionally biased stretch (polar residues) spans 573–595 (LLQTTNNSPMNSKPQQIKMQSTK). The tract at residues 573-669 (LLQTTNNSPM…GACMTPASGC (97 aa)) is disordered. Serine 580 is subject to Phosphoserine. Residues 633–645 (SSSLQPQPKPSSG) are compositionally biased toward low complexity. A compositionally biased stretch (basic residues) spans 646–657 (GRRRGGQRHKVK).

The protein belongs to the TRAFAC class translation factor GTPase superfamily. Classic translation factor GTPase family. GTPBP1 subfamily. Interacts with EXOSC2/RRP4, EXOSC3/RRP40, EXOSC5/RRP46, HNRNPD, HNRNPR and SYNCRIP. Identified in a complex with AANAT mRNA, but does not bind mRNA by itself.

The protein resides in the cytoplasm. Functionally, promotes degradation of target mRNA species. Plays a role in the regulation of circadian mRNA stability. Binds GTP and has GTPase activity. This Bos taurus (Bovine) protein is GTP-binding protein 1 (GTPBP1).